We begin with the raw amino-acid sequence, 126 residues long: Histone H2B type 1-J (126 aa).

Over residues 1–12 (MPEPAKSAPAPK) the composition is skewed to low complexity. Positions 1–35 (MPEPAKSAPAPKKGSKKAVTKAQKKDGKKRKRSRK) are disordered. P2 bears the N-acetylproline mark. E3 bears the ADP-ribosyl glutamic acid mark. K6 carries the N6-(2-hydroxyisobutyryl)lysine; alternate modification. At K6 the chain carries N6-(beta-hydroxybutyryl)lysine; alternate. N6-acetyllysine; alternate is present on K6. K6 carries the post-translational modification N6-butyryllysine; alternate. The residue at position 6 (K6) is an N6-crotonyllysine; alternate. K6 is subject to N6-lactoyllysine; alternate. K6 participates in a covalent cross-link: Glycyl lysine isopeptide (Lys-Gly) (interchain with G-Cter in SUMO2); alternate. S7 bears the ADP-ribosylserine mark. K12 is modified (N6-(beta-hydroxybutyryl)lysine; alternate). 2 positions are modified to N6-acetyllysine; alternate: K12 and K13. Residues K12 and K13 each carry the N6-crotonyllysine; alternate modification. K12 carries the post-translational modification N6-lactoyllysine; alternate. K13 bears the N6-(2-hydroxyisobutyryl)lysine; alternate mark. S15 is subject to Phosphoserine; by STK4/MST1. 4 positions are modified to N6-acetyllysine; alternate: K16, K17, K21, and K24. N6-crotonyllysine; alternate is present on residues K16, K17, K21, and K24. An N6-lactoyllysine; alternate mark is found at K16, K17, K21, and K24. Residues K17 and K21 each carry the N6-(beta-hydroxybutyryl)lysine; alternate modification. The residue at position 17 (K17) is an N6-glutaryllysine; alternate. Residues K21 and K24 each carry the N6-(2-hydroxyisobutyryl)lysine; alternate modification. Position 21 is an N6-butyryllysine; alternate (K21). Residue K21 forms a Glycyl lysine isopeptide (Lys-Gly) (interchain with G-Cter in SUMO2); alternate linkage. K25 carries the N6-(2-hydroxyisobutyryl)lysine modification. K35 carries the N6-(2-hydroxyisobutyryl)lysine; alternate modification. K35 carries the N6-(beta-hydroxybutyryl)lysine; alternate modification. The residue at position 35 (K35) is an N6-crotonyllysine; alternate. N6-glutaryllysine; alternate is present on K35. At K35 the chain carries N6-succinyllysine; alternate. A Glycyl lysine isopeptide (Lys-Gly) (interchain with G-Cter in ubiquitin); alternate cross-link involves residue K35. A PolyADP-ribosyl glutamic acid modification is found at E36. A Phosphoserine; by AMPK modification is found at S37. N6-(2-hydroxyisobutyryl)lysine; alternate is present on residues K44, K47, and K58. N6-lactoyllysine; alternate is present on K44. Residues K44 and K47 each carry the N6-glutaryllysine; alternate modification. K47 carries the post-translational modification N6-methyllysine; alternate. K58 carries the N6,N6-dimethyllysine; alternate modification. R80 bears the Dimethylated arginine mark. K86 carries the N6-(2-hydroxyisobutyryl)lysine; alternate modification. K86 bears the N6-(beta-hydroxybutyryl)lysine; alternate mark. K86 carries the post-translational modification N6-acetyllysine; alternate. K86 is subject to N6-lactoyllysine; alternate. K86 bears the N6,N6,N6-trimethyllysine; alternate mark. R87 and R93 each carry omega-N-methylarginine. K109 is modified (N6-(2-hydroxyisobutyryl)lysine; alternate). K109 carries the post-translational modification N6-lactoyllysine; alternate. Position 109 is an N6-glutaryllysine; alternate (K109). N6-methyllysine; alternate is present on K109. A glycan (O-linked (GlcNAc) serine) is linked at S113. T116 carries the phosphothreonine modification. Residues K117 and K121 each carry the N6-(2-hydroxyisobutyryl)lysine; alternate modification. N6-(beta-hydroxybutyryl)lysine; alternate is present on residues K117 and K121. Residues K117 and K121 each carry the N6-lactoyllysine; alternate modification. 2 positions are modified to N6-glutaryllysine; alternate: K117 and K121. K117 and K121 each carry N6-succinyllysine; alternate. An N6-malonyllysine; alternate modification is found at K117. Position 117 is an N6-methylated lysine; alternate (K117). A Glycyl lysine isopeptide (Lys-Gly) (interchain with G-Cter in ubiquitin); alternate cross-link involves residue K121.

The protein belongs to the histone H2B family. The nucleosome is a histone octamer containing two molecules each of H2A, H2B, H3 and H4 assembled in one H3-H4 heterotetramer and two H2A-H2B heterodimers. The octamer wraps approximately 147 bp of DNA. Heterodimer H2BC11 and H2AZ1 interacts with VPS72 (via N-terminal domain). Monoubiquitination at Lys-35 (H2BK34Ub) by the MSL1/MSL2 dimer is required for histone H3 'Lys-4' (H3K4me) and 'Lys-79' (H3K79me) methylation and transcription activation at specific gene loci, such as HOXA9 and MEIS1 loci. Similarly, monoubiquitination at Lys-121 (H2BK120Ub) by the RNF20/40 complex gives a specific tag for epigenetic transcriptional activation and is also prerequisite for histone H3 'Lys-4' and 'Lys-79' methylation. It also functions cooperatively with the FACT dimer to stimulate elongation by RNA polymerase II. H2BK120Ub also acts as a regulator of mRNA splicing: deubiquitination by USP49 is required for efficient cotranscriptional splicing of a large set of exons. Post-translationally, phosphorylation at Ser-37 (H2BS36ph) by AMPK in response to stress promotes transcription. Phosphorylated on Ser-15 (H2BS14ph) by STK4/MST1 during apoptosis; which facilitates apoptotic chromatin condensation. Also phosphorylated on Ser-15 in response to DNA double strand breaks (DSBs), and in correlation with somatic hypermutation and immunoglobulin class-switch recombination. In terms of processing, glcNAcylation at Ser-113 promotes monoubiquitination of Lys-121. It fluctuates in response to extracellular glucose, and associates with transcribed genes. ADP-ribosylated by PARP1 or PARP2 on Ser-7 (H2BS6ADPr) in response to DNA damage. H2BS6ADPr promotes recruitment of CHD1L. Mono-ADP-ribosylated on Glu-3 (H2BE2ADPr) by PARP3 in response to single-strand breaks. Poly ADP-ribosylation on Glu-36 (H2BE35ADPr) by PARP1 regulates adipogenesis: it inhibits phosphorylation at Ser-37 (H2BS36ph), thereby blocking expression of pro-adipogenetic genes. Post-translationally, crotonylation (Kcr) is specifically present in male germ cells and marks testis-specific genes in post-meiotic cells, including X-linked genes that escape sex chromosome inactivation in haploid cells. Crotonylation marks active promoters and enhancers and confers resistance to transcriptional repressors. It is also associated with post-meiotically activated genes on autosomes. In terms of processing, lactylated in macrophages by EP300/P300 by using lactoyl-CoA directly derived from endogenous or exogenous lactate, leading to stimulates gene transcription.

It is found in the nucleus. It localises to the chromosome. In terms of biological role, core component of nucleosome. Nucleosomes wrap and compact DNA into chromatin, limiting DNA accessibility to the cellular machineries which require DNA as a template. Histones thereby play a central role in transcription regulation, DNA repair, DNA replication and chromosomal stability. DNA accessibility is regulated via a complex set of post-translational modifications of histones, also called histone code, and nucleosome remodeling. Has broad antibacterial activity. May contribute to the formation of the functional antimicrobial barrier of the colonic epithelium, and to the bactericidal activity of amniotic fluid. The protein is Histone H2B type 1-J of Homo sapiens (Human).